We begin with the raw amino-acid sequence, 156 residues long: Large ribosomal subunit protein uL15 (156 aa).

The interval 1–56 (MDLSNLKPAEGATQAGQRLGRGEGSGRGGHSSTRGTKGQSSRSGSGTRPIWFEGGQ) is disordered.

Belongs to the universal ribosomal protein uL15 family. In terms of assembly, part of the 50S ribosomal subunit.

Its function is as follows. Binds to the 23S rRNA. The chain is Large ribosomal subunit protein uL15 from Salinibacter ruber (strain DSM 13855 / M31).